Reading from the N-terminus, the 90-residue chain is Lectin-1 (90 aa).

Glutamine 1 bears the Pyrrolidone carboxylic acid mark. An intrachain disulfide couples cysteine 46 to cysteine 71.

The N-terminus is blocked. In terms of processing, contains seven disulfide bonds. Post-translationally, proteolytically cleaved. Major mature form may consist of cleaved, disulfide-bonded N-terminal and C-terminal chains.

Its function is as follows. Lectin with specificity for complex N-linked glycans and O-linked glycans. Has hemagglutinating activity towards rabbit erythrocytes. The polypeptide is Lectin-1 (Hypnea musciformis (Red alga)).